The chain runs to 67 residues: Penaeidin-4d (67 aa).

Residues 1-19 (MRLLVCLVFLASFAMVCQG) form the signal peptide. Intrachain disulfides connect Cys-42/Cys-56, Cys-45/Cys-63, and Cys-57/Cys-64. Leu-66 carries the post-translational modification Leucine amide.

This sequence belongs to the penaeidin family.

The protein localises to the cytoplasmic granule. In terms of biological role, antibacterial and antifungal activity. Presents chitin-binding activity. This chain is Penaeidin-4d, found in Penaeus setiferus (Atlantic white shrimp).